Here is a 159-residue protein sequence, read N- to C-terminus: MRYMILGLLALAAVCSAAKKVEFKEPACNVTFKSEANECTTLIKCTTEHEKLIIRHKDKIGKYAVYAIWQPGDTNDYNVTVFQGENRKTFMYKFPFYEMCDITMYMSKQYKLWPPQKCLENTGTFCSTALLITALALVCTLLYLKYKSRRSFIDEKKMP.

The signal sequence occupies residues Met-1–Ala-17. Residues Ala-18–Gly-123 are Lumenal-facing. 2 disulfide bridges follow: Cys-28/Cys-45 and Cys-39/Cys-100. N-linked (GlcNAc...) asparagine; by host glycosylation is found at Asn-29 and Asn-78. A helical membrane pass occupies residues Thr-124–Leu-144. Topologically, residues Lys-145–Pro-159 are cytoplasmic. Residues Lys-156–Pro-159 carry the Di-lysine motif motif.

It belongs to the adenoviridae E19 family. Both disulfide bonds are absolutely critical for the interaction with MHC antigens. In terms of processing, N-glycosylated; high-mannose.

Its subcellular location is the host endoplasmic reticulum membrane. In terms of biological role, binds and retains class I heavy chains in the endoplasmic reticulum during the early period of virus infection, thereby impairing their transport to the cell surface. Also delays the expression of class I alleles that it cannot affect by direct retention. Binds transporters associated with antigen processing (TAP) and acts as a tapasin inhibitor, preventing class I/TAP association. In consequence, infected cells are masked for immune recognition by cytotoxic T-lymphocytes. This Homo sapiens (Human) protein is Early E3 18.5 kDa glycoprotein.